Here is a 251-residue protein sequence, read N- to C-terminus: B3 domain-containing protein REM7 (251 aa).

2 consecutive DNA-binding regions (TF-B3) follow at residues 11-103 (NSHF…LGPS) and 170-251 (CFVA…SRLN).

The protein localises to the nucleus. The chain is B3 domain-containing protein REM7 (REM7) from Arabidopsis thaliana (Mouse-ear cress).